We begin with the raw amino-acid sequence, 60 residues long: UPF0434 protein NMCC_0628 (60 aa).

The protein belongs to the UPF0434 family.

This chain is UPF0434 protein NMCC_0628, found in Neisseria meningitidis serogroup C (strain 053442).